The sequence spans 493 residues: tRNA-dihydrouridine(20) synthase [NAD(P)+]-like (493 aa).

Residues 1–333 (MILNSLSLCY…TQELDAQQAR (333 aa)) form a catalytic domain region. FMN contacts are provided by residues 18–20 (PMV), E43, and Q87. C116 (proton donor) is an active-site residue. FMN is bound by residues K155, H183, 214-216 (NGG), and 242-243 (AR). Positions 330-342 (QQARLSAKTSEQT) are enriched in polar residues. The interval 330-349 (QQARLSAKTSEQTGEPAEDT) is disordered. Interaction with tRNA stretches follow at residues 367–371 (QITPK) and 420–424 (KLAEQ). The DRBM domain occupies 369–436 (TPKMCLLEWC…AIVCLRSQGL (68 aa)). The segment at 438 to 493 (EGRLGEESPSLHKRKREAPDQDPGGPRAQELAQPGDLCKKPFVALGSGEESPLEGW) is disordered. A phosphoserine mark is found at S445 and S488.

The protein belongs to the Dus family. Dus2 subfamily. As to quaternary structure, interacts with EPRS1. Interacts (via DRBM domain) with PRKRA and EIF2AK2/PKR (via DRBM 1 domain). FMN is required as a cofactor. Weak expression in heart, placenta and skeletal muscle. Up-regulated in most lung cancer cells (at protein level).

Its subcellular location is the cytoplasm. It is found in the endoplasmic reticulum. It catalyses the reaction 5,6-dihydrouridine(20) in tRNA + NADP(+) = uridine(20) in tRNA + NADPH + H(+). With respect to regulation, inhibited by canertinib, PD 168393, AST-1306 and PF-6274484. In terms of biological role, catalyzes the NADPH-dependent synthesis of dihydrouridine, a modified base found in the D-loop of most tRNAs. Specifically modifies U20 in cytoplasmic tRNAs. Activity depends on the presence of guanosine at position 19 in the tRNA substrate. Negatively regulates the activation of EIF2AK2/PKR. The polypeptide is tRNA-dihydrouridine(20) synthase [NAD(P)+]-like (DUS2) (Homo sapiens (Human)).